A 70-amino-acid chain; its full sequence is Large ribosomal subunit protein bL31 (70 aa).

C16, C18, C37, and C40 together coordinate Zn(2+).

Belongs to the bacterial ribosomal protein bL31 family. Type A subfamily. As to quaternary structure, part of the 50S ribosomal subunit. Requires Zn(2+) as cofactor.

Binds the 23S rRNA. The chain is Large ribosomal subunit protein bL31 from Klebsiella pneumoniae (strain 342).